A 165-amino-acid polypeptide reads, in one-letter code: NAD(P)H-quinone oxidoreductase subunit J, chloroplastic (165 aa).

This sequence belongs to the complex I 30 kDa subunit family. In terms of assembly, NDH is composed of at least 16 different subunits, 5 of which are encoded in the nucleus.

It is found in the plastid. The protein resides in the chloroplast thylakoid membrane. The catalysed reaction is a plastoquinone + NADH + (n+1) H(+)(in) = a plastoquinol + NAD(+) + n H(+)(out). It carries out the reaction a plastoquinone + NADPH + (n+1) H(+)(in) = a plastoquinol + NADP(+) + n H(+)(out). Its function is as follows. NDH shuttles electrons from NAD(P)H:plastoquinone, via FMN and iron-sulfur (Fe-S) centers, to quinones in the photosynthetic chain and possibly in a chloroplast respiratory chain. The immediate electron acceptor for the enzyme in this species is believed to be plastoquinone. Couples the redox reaction to proton translocation, and thus conserves the redox energy in a proton gradient. The protein is NAD(P)H-quinone oxidoreductase subunit J, chloroplastic of Ipomoea purpurea (Common morning glory).